The chain runs to 4646 residues: Cytoplasmic dynein 1 heavy chain 1 (4646 aa).

Ser2 carries the N-acetylserine modification. Positions 53 to 1867 (EAALEEKSAL…SIQMANAKFN (1815 aa)) are stem. Phosphoserine is present on Ser70. 3 coiled-coil regions span residues 181 to 202 (SVEKKIAELEMGLLHLQQNIEI), 455 to 478 (AHRKLQARLDQMRKFRRQHEQLRA), and 543 to 566 (TEAWEAAMKRYDERIDRVETRITA). Positions 448 to 703 (MVWRINPAHR…NTQEIFDDWA (256 aa)) are interaction with DYNC1I2. Residues 651–802 (AKQIDRQLTA…EKVEERNTIS (152 aa)) are interaction with DYNC1LI2. Residue Lys1125 is modified to N6-acetyllysine. Coiled coils occupy residues 1171–1252 (TYVQ…AVES) and 1357–1373 (RKLRQNLDALLNQLKSF). Ser1230 is subject to Phosphoserine. AAA stretches follow at residues 1868 to 2099 (YGFE…VLVS), 2180 to 2452 (EELK…LTRL), 2556 to 2805 (EVET…WVRG), and 2899 to 3168 (VFYE…GGRT). ATP-binding positions include 1906-1913 (GPAGTGKT) and 2224-2231 (GPSGSGKS). The tract at residues 2390-2411 (GEDEAQRRRKGKEDEGEEAASP) is disordered. ATP is bound by residues 2595 to 2602 (GPPGSGKT) and 2937 to 2944 (GVSGAGKT). Coiled-coil stretches lie at residues 3189–3275 (EKRS…ADKQ), 3396–3500 (AIAQ…KNQM), and 3737–3800 (EFQL…VSQQ). Positions 3189 to 3500 (EKRSELEEQQ…KTSETFKNQM (312 aa)) are stalk. Position 3480 is an N6-acetyllysine (Lys3480). AAA regions lie at residues 3553 to 3782 (LSNA…EVTR) and 4005 to 4221 (AHMF…TVDT). Phosphoserine is present on Ser4162. The residue at position 4283 (Lys4283) is an N6-acetyllysine. Thr4366 is modified (phosphothreonine). Residue Ser4368 is modified to Phosphoserine.

The protein belongs to the dynein heavy chain family. Homodimer. The cytoplasmic dynein 1 complex consists of two catalytic heavy chains (HCs) and a number of non-catalytic subunits presented by intermediate chains (ICs), light intermediate chains (LICs) and light chains (LCs); the composition seems to vary in respect to the IC, LIC and LC composition. The heavy chain homodimer serves as a scaffold for the probable homodimeric assembly of the respective non-catalytic subunits. The ICs and LICs bind directly to the HC dimer and dynein LCs assemble on the IC dimer. Interacts with DYNC1LI1; DYNC1LI1 and DYNC1LI2 bind mutually exclusive to DYNC1H1. Interacts with DYNC1LI2; DYNC1LI1 and DYNC1LI2 bind mutually exclusive to DYNC1H1. Interacts with DYNC1I2. Interacts with BICD2. Interacts with isoform 2 of CRACR2A. Interacts with DNALI1.

It localises to the cytoplasm. The protein localises to the cytoskeleton. In terms of biological role, cytoplasmic dynein 1 acts as a motor for the intracellular retrograde motility of vesicles and organelles along microtubules. Dynein has ATPase activity; the force-producing power stroke is thought to occur on release of ADP. Plays a role in mitotic spindle assembly and metaphase plate congression. The protein is Cytoplasmic dynein 1 heavy chain 1 of Homo sapiens (Human).